Reading from the N-terminus, the 302-residue chain is MRIVLITGISGSGKSVALNALEDAGYYCVDNLPPHVLPELARYLAGEGQHRLAVAIDARSSASLDEMPGLIRDLSREHDVRVLFLNASTQALIQRFSETRRRHPLSGSLSHDADVGLLSSLEEAIERERHLVAPLAEFGHQIDTSTLRANALRTWVKRFIEQKNNDLMVMFESFGFKRGVPLDADLMFDVRALPNPYYDHELRPLTGLDQPVIAFLDALPIVHQMIDDIHAFLMKWLPHFRDDNRSYLTVAIGCTGGQHRSVFIAETLAARLAHEANVIVRHRDAPVDVDASSRLVSEVDRP.

Position 8–15 (8–15) interacts with ATP; that stretch reads GISGSGKS. Position 57–60 (57–60) interacts with GTP; it reads DARS.

Belongs to the RapZ-like family.

Displays ATPase and GTPase activities. The sequence is that of Nucleotide-binding protein Bcep18194_A6125 from Burkholderia lata (strain ATCC 17760 / DSM 23089 / LMG 22485 / NCIMB 9086 / R18194 / 383).